The primary structure comprises 568 residues: Proline--tRNA ligase (568 aa).

Belongs to the class-II aminoacyl-tRNA synthetase family. ProS type 1 subfamily. As to quaternary structure, homodimer.

Its subcellular location is the cytoplasm. It catalyses the reaction tRNA(Pro) + L-proline + ATP = L-prolyl-tRNA(Pro) + AMP + diphosphate. Functionally, catalyzes the attachment of proline to tRNA(Pro) in a two-step reaction: proline is first activated by ATP to form Pro-AMP and then transferred to the acceptor end of tRNA(Pro). As ProRS can inadvertently accommodate and process non-cognate amino acids such as alanine and cysteine, to avoid such errors it has two additional distinct editing activities against alanine. One activity is designated as 'pretransfer' editing and involves the tRNA(Pro)-independent hydrolysis of activated Ala-AMP. The other activity is designated 'posttransfer' editing and involves deacylation of mischarged Ala-tRNA(Pro). The misacylated Cys-tRNA(Pro) is not edited by ProRS. This chain is Proline--tRNA ligase, found in Nitrosomonas eutropha (strain DSM 101675 / C91 / Nm57).